Here is a 21-residue protein sequence, read N- to C-terminus: Thanatin (21 aa).

Cys-11 and Cys-18 are disulfide-bonded.

Its subcellular location is the secreted. Functionally, insect defense peptide with a broad spectrum of activity against Gram-positive and Gram-negative bacteria and fungi. No activity against S.aureus. Stops respiration in bacteria but does not permeabilize their inner membranes. This chain is Thanatin, found in Podisus maculiventris (Spined soldier bug).